A 498-amino-acid polypeptide reads, in one-letter code: ATP synthase subunit beta, chloroplastic (498 aa).

Glycine 172–threonine 179 serves as a coordination point for ATP.

It belongs to the ATPase alpha/beta chains family. In terms of assembly, F-type ATPases have 2 components, CF(1) - the catalytic core - and CF(0) - the membrane proton channel. CF(1) has five subunits: alpha(3), beta(3), gamma(1), delta(1), epsilon(1). CF(0) has four main subunits: a(1), b(1), b'(1) and c(9-12).

The protein resides in the plastid. It is found in the chloroplast thylakoid membrane. The catalysed reaction is ATP + H2O + 4 H(+)(in) = ADP + phosphate + 5 H(+)(out). Produces ATP from ADP in the presence of a proton gradient across the membrane. The catalytic sites are hosted primarily by the beta subunits. This is ATP synthase subunit beta, chloroplastic from Oryza nivara (Indian wild rice).